The chain runs to 298 residues: 4-hydroxybenzoate octaprenyltransferase (298 aa).

7 helical membrane-spanning segments follow: residues isoleucine 30–isoleucine 50, glycine 54–asparagine 74, valine 105–threonine 125, phenylalanine 148–isoleucine 168, aspartate 218–leucine 238, leucine 240–glutamine 260, and alanine 275–tryptophan 295.

This sequence belongs to the UbiA prenyltransferase family. The cofactor is Mg(2+).

The protein resides in the cell inner membrane. It carries out the reaction all-trans-octaprenyl diphosphate + 4-hydroxybenzoate = 4-hydroxy-3-(all-trans-octaprenyl)benzoate + diphosphate. It participates in cofactor biosynthesis; ubiquinone biosynthesis. In terms of biological role, catalyzes the prenylation of para-hydroxybenzoate (PHB) with an all-trans polyprenyl group. Mediates the second step in the final reaction sequence of ubiquinone-8 (UQ-8) biosynthesis, which is the condensation of the polyisoprenoid side chain with PHB, generating the first membrane-bound Q intermediate 3-octaprenyl-4-hydroxybenzoate. The protein is 4-hydroxybenzoate octaprenyltransferase of Chromohalobacter salexigens (strain ATCC BAA-138 / DSM 3043 / CIP 106854 / NCIMB 13768 / 1H11).